The sequence spans 533 residues: WD repeat-containing protein JIP5 (533 aa).

WD repeat units lie at residues 26–67 (NYSD…EKQS), 84–130 (GKVS…GSCR), 176–215 (NSND…GSKL), 264–309 (NQDD…FMDQ), and 372–409 (GAAD…EIAL). Composition is skewed to acidic residues over residues 408 to 428 (ALDE…EDDL) and 437 to 452 (ASDE…EDEK). A disordered region spans residues 408–533 (ALDESDDSDD…EHGIRRFDDL (126 aa)). Composition is skewed to basic and acidic residues over residues 453–463 (EDKPVKIDHPL) and 521–533 (QKHE…FDDL).

Belongs to the WD repeat WDR55 family.

It localises to the nucleus. It is found in the nucleolus. This Scheffersomyces stipitis (strain ATCC 58785 / CBS 6054 / NBRC 10063 / NRRL Y-11545) (Yeast) protein is WD repeat-containing protein JIP5 (JIP5).